We begin with the raw amino-acid sequence, 582 residues long: Protein bps2 (582 aa).

28-35 (APNAYGKT) is a binding site for ATP. The stretch at 243-281 (RQSYERQLQEINAQLQKITAQRNEAEIEIRLLEKVLDQI) forms a coiled coil. One can recognise a Zinc-hook domain in the interval 243-351 (RQSYERQLQE…KLKELDQISS (109 aa)). C292 and C295 together coordinate Zn(2+). Positions 320 to 351 (SLYAGIKKEADELLSKKSEIEKKLKELDQISS) form a coiled coil.

This Acidianus ambivalens (Desulfurolobus ambivalens) protein is Protein bps2 (bps2).